We begin with the raw amino-acid sequence, 149 residues long: Large ribosomal subunit protein bL9 (149 aa).

This sequence belongs to the bacterial ribosomal protein bL9 family.

Its function is as follows. Binds to the 23S rRNA. The polypeptide is Large ribosomal subunit protein bL9 (Salmonella dublin (strain CT_02021853)).